Consider the following 460-residue polypeptide: tRNA-splicing endonuclease subunit Sen2 (460 aa).

The disordered stretch occupies residues 143–215 (EKEETPQHEP…SPSSHNGHVA (73 aa)). Residues 159–170 (SSLEGRVEKDEL) are compositionally biased toward basic and acidic residues. Active-site residues include Tyr-364 and His-372. 3 positions are modified to phosphoserine: Ser-403, Ser-406, and Ser-410. Residue Lys-411 is part of the active site.

It belongs to the tRNA-intron endonuclease family. As to quaternary structure, tRNA splicing endonuclease is a heterotetramer composed of TSEN2, TSEN15, TSEN34/LENG5 and TSEN54. tRNA splicing endonuclease complex also contains proteins of the pre-mRNA 3'-end processing machinery such as CLP1, CPSF1, CPSF4 and CSTF2.

The protein resides in the nucleus. It is found in the nucleolus. The catalysed reaction is pretRNA = a 3'-half-tRNA molecule with a 5'-OH end + a 5'-half-tRNA molecule with a 2',3'-cyclic phosphate end + an intron with a 2',3'-cyclic phosphate and a 5'-hydroxyl terminus.. In terms of biological role, constitutes one of the two catalytic subunit of the tRNA-splicing endonuclease complex, a complex responsible for identification and cleavage of the splice sites in pre-tRNA. It cleaves pre-tRNA at the 5'- and 3'-splice sites to release the intron. The products are an intron and two tRNA half-molecules bearing 2',3'-cyclic phosphate and 5'-OH termini. There are no conserved sequences at the splice sites, but the intron is invariably located at the same site in the gene, placing the splice sites an invariant distance from the constant structural features of the tRNA body. Probably carries the active site for 5'-splice site cleavage. The tRNA splicing endonuclease is also involved in mRNA processing via its association with pre-mRNA 3'-end processing factors, establishing a link between pre-tRNA splicing and pre-mRNA 3'-end formation, suggesting that the endonuclease subunits function in multiple RNA-processing events. The sequence is that of tRNA-splicing endonuclease subunit Sen2 (Tsen2) from Mus musculus (Mouse).